Here is an 82-residue protein sequence, read N- to C-terminus: MGREFGNLTRIRHVISYSLSPFEQRAFPHYFSKGIPNVLRRTRERILRVAPPFVLFYLIYTWGNQEFAQSKRKNPAKYENDK.

The Mitochondrial matrix portion of the chain corresponds to 1–39; it reads MGREFGNLTRIRHVISYSLSPFEQRAFPHYFSKGIPNVL. The residue at position 16 (Ser16) is a Phosphoserine. Lys33 is subject to N6-acetyllysine; alternate. Lys33 bears the N6-succinyllysine; alternate mark. Residues 40–68 traverse the membrane as a helical segment; it reads RRTRERILRVAPPFVLFYLIYTWGNQEFA. Topologically, residues 69–82 are mitochondrial intermembrane; that stretch reads QSKRKNPAKYENDK.

The protein belongs to the UQCRQ/QCR8 family. In terms of assembly, component of the ubiquinol-cytochrome c oxidoreductase (cytochrome b-c1 complex, complex III, CIII), a multisubunit enzyme composed of 11 subunits. The complex is composed of 3 respiratory subunits cytochrome b, cytochrome c1 and Rieske protein UQCRFS1, 2 core protein subunits UQCRC1/QCR1 and UQCRC2/QCR2, and 6 low-molecular weight protein subunits UQCRH/QCR6, UQCRB/QCR7, UQCRQ/QCR8, UQCR10/QCR9, UQCR11/QCR10 and subunit 9, the cleavage product of Rieske protein UQCRFS1. The complex exists as an obligatory dimer and forms supercomplexes (SCs) in the inner mitochondrial membrane with NADH-ubiquinone oxidoreductase (complex I, CI) and cytochrome c oxidase (complex IV, CIV), resulting in different assemblies (supercomplex SCI(1)III(2)IV(1) and megacomplex MCI(2)III(2)IV(2)). Interacts with UQCC6.

The protein localises to the mitochondrion inner membrane. Component of the ubiquinol-cytochrome c oxidoreductase, a multisubunit transmembrane complex that is part of the mitochondrial electron transport chain which drives oxidative phosphorylation. The respiratory chain contains 3 multisubunit complexes succinate dehydrogenase (complex II, CII), ubiquinol-cytochrome c oxidoreductase (cytochrome b-c1 complex, complex III, CIII) and cytochrome c oxidase (complex IV, CIV), that cooperate to transfer electrons derived from NADH and succinate to molecular oxygen, creating an electrochemical gradient over the inner membrane that drives transmembrane transport and the ATP synthase. The cytochrome b-c1 complex catalyzes electron transfer from ubiquinol to cytochrome c, linking this redox reaction to translocation of protons across the mitochondrial inner membrane, with protons being carried across the membrane as hydrogens on the quinol. In the process called Q cycle, 2 protons are consumed from the matrix, 4 protons are released into the intermembrane space and 2 electrons are passed to cytochrome c. The sequence is that of Cytochrome b-c1 complex subunit 8 (Uqcrq) from Rattus norvegicus (Rat).